The primary structure comprises 2028 residues: Phosphatidylinositol 4-kinase alpha 1 (2028 aa).

Positions 184 to 241 are disordered; that stretch reads PASPKEQRQQNSANSETDTSSSQGSPISTNRYPSGKTEMASPGDEVASHGSNLSSKSS. Polar residues predominate over residues 192–215; it reads QQNSANSETDTSSSQGSPISTNRY. The span at 231–241 shows a compositional bias: low complexity; the sequence is SHGSNLSSKSS. The PIK helical domain maps to 1483 to 1659; it reads TEYAKTAFSV…NAAFQEILPQ (177 aa). The tract at residues 1660-1773 is pleckstrin homology (PH) domain conferring phosphoinositide binding specificity; that stretch reads VRQHIIDGFS…VKPQACIFKV (114 aa). One can recognise a PI3K/PI4K catalytic domain in the interval 1734 to 2012; sequence VDSGIPLQSA…VCTDAYNKWT (279 aa). The tract at residues 1740-1746 is G-loop; the sequence is LQSAAKV. Positions 1876–1884 are catalytic loop; that stretch reads QPKDRHNGN. The tract at residues 1895–1920 is activation loop; sequence HIDFGFILETSPGGNMRFESAHFKLS.

The protein belongs to the PI3/PI4-kinase family. Type III PI4K subfamily. As to quaternary structure, interacts in vitro with actin filaments via its PH domain. In terms of tissue distribution, present in leaves and inflorescences.

It is found in the membrane. It localises to the cytoplasm. Its subcellular location is the perinuclear region. The enzyme catalyses a 1,2-diacyl-sn-glycero-3-phospho-(1D-myo-inositol) + ATP = a 1,2-diacyl-sn-glycero-3-phospho-(1D-myo-inositol 4-phosphate) + ADP + H(+). Its activity is regulated as follows. Repressed by PtdIns4P, adenosine and wortmannin, but stimulated by other negatively charged lipids such as PtdIns3P, PtdOH, and phosphatidyl-serine (PtdSer). In terms of biological role, acts on phosphatidylinositol (PtdIns) in the first committed step in the production of the second messenger inositol-1,4,5,-trisphosphate. Can bind to phosphatidylinositol 4-monophosphate (PI-4-P or PtdIns4P), phosphatidylinositol 4,5-bisphosphate (PI-4,5-P2 or PtdIns4,5P2), and phosphatidic acid (PtdOH), but not to 3-phosphoinositides. May function upstream of the cold response phosphoinositide-dependent phospholipase C (PI-PLC) pathway. The sequence is that of Phosphatidylinositol 4-kinase alpha 1 from Arabidopsis thaliana (Mouse-ear cress).